Consider the following 369-residue polypeptide: Bi-functional coumaroyl CoA and feruloyl CoA ortho-hydroxylase Diox2 (369 aa).

The Fe2OG dioxygenase domain maps to 215–318; that stretch reads GSRRVNLNYY…RISVPLFVNP (104 aa). Tyrosine 224 serves as a coordination point for 2-oxoglutarate. Residues histidine 239, aspartate 241, and histidine 299 each coordinate Fe cation. Residues arginine 309 and serine 311 each contribute to the 2-oxoglutarate site.

Belongs to the iron/ascorbate-dependent oxidoreductase family. The cofactor is L-ascorbate. Requires Fe(2+) as cofactor.

The catalysed reaction is (E)-4-coumaroyl-CoA + 2-oxoglutarate + O2 = (E)-2,4-dihydroxycinnamoyl-CoA + succinate + CO2. The enzyme catalyses (E)-feruloyl-CoA + 2-oxoglutarate + O2 = (E)-6-hydroxyferuloyl-CoA + succinate + CO2. It functions in the pathway phenylpropanoid metabolism. In terms of biological role, 2-oxoglutarate (OG)- and Fe(II)-dependent dioxygenase (2OGD) involved in scopoletin and umbelliferone biosynthesis. Converts feruloyl CoA into 6'-hydroxyferuloyl CoA, and p-coumaroyl CoA into 2,4-dihydroxycinnamoyl-CoA. This chain is Bi-functional coumaroyl CoA and feruloyl CoA ortho-hydroxylase Diox2, found in Ruta graveolens (Common rue).